Consider the following 135-residue polypeptide: Protein Wnt-7c (135 aa).

Cystine bridges form between C3/C17 and C5/C12. The O-palmitoleoyl serine; by PORCN moiety is linked to residue S9. N-linked (GlcNAc...) asparagine glycans are attached at residues N62, N85, and N98. 3 disulfides stabilise this stretch: C81–C112, C97–C107, and C134–C135.

Belongs to the Wnt family. Palmitoleoylation is required for efficient binding to frizzled receptors. Depalmitoleoylation leads to Wnt signaling pathway inhibition.

Its subcellular location is the secreted. It localises to the extracellular space. The protein localises to the extracellular matrix. Functionally, ligand for members of the frizzled family of seven transmembrane receptors. Probable developmental protein. May be a signaling molecule which affects the development of discrete regions of tissues. Is likely to signal over only few cell diameters. The polypeptide is Protein Wnt-7c (wnt7c) (Xenopus laevis (African clawed frog)).